Consider the following 269-residue polypeptide: Aminodeoxychorismate lyase (269 aa).

N6-(pyridoxal phosphate)lysine is present on Lys-140.

The protein belongs to the class-IV pyridoxal-phosphate-dependent aminotransferase family. Homodimer. It depends on pyridoxal 5'-phosphate as a cofactor.

It catalyses the reaction 4-amino-4-deoxychorismate = 4-aminobenzoate + pyruvate + H(+). Its pathway is cofactor biosynthesis; tetrahydrofolate biosynthesis; 4-aminobenzoate from chorismate: step 2/2. Involved in the biosynthesis of p-aminobenzoate (PABA), a precursor of tetrahydrofolate. Converts 4-amino-4-deoxychorismate into 4-aminobenzoate (PABA) and pyruvate. The polypeptide is Aminodeoxychorismate lyase (pabC) (Escherichia coli (strain K12)).